The primary structure comprises 350 residues: S-adenosylmethionine:tRNA ribosyltransferase-isomerase (350 aa).

The protein belongs to the QueA family. Monomer.

The protein localises to the cytoplasm. The enzyme catalyses 7-aminomethyl-7-carbaguanosine(34) in tRNA + S-adenosyl-L-methionine = epoxyqueuosine(34) in tRNA + adenine + L-methionine + 2 H(+). The protein operates within tRNA modification; tRNA-queuosine biosynthesis. Transfers and isomerizes the ribose moiety from AdoMet to the 7-aminomethyl group of 7-deazaguanine (preQ1-tRNA) to give epoxyqueuosine (oQ-tRNA). The protein is S-adenosylmethionine:tRNA ribosyltransferase-isomerase of Bacillus cytotoxicus (strain DSM 22905 / CIP 110041 / 391-98 / NVH 391-98).